Here is a 256-residue protein sequence, read N- to C-terminus: Cytochrome c-type biogenesis protein CcmE homolog, mitochondrial (256 aa).

A mitochondrion-targeting transit peptide spans 1–57 (MAARLLFRRSSQILRSIQRNPQISSSFESPPCPIFHSLTTASPDPSRLSSLTFLRSL). Residues 84–106 (LWTYALTFSCIAGFVVIVLNQFQ) traverse the membrane as a helical segment. The heme site is built by His-222 and Tyr-226.

Belongs to the CcmE/CycJ family.

The protein localises to the mitochondrion inner membrane. It is found in the mitochondrion intermembrane space. Its function is as follows. Heme-binding chaperone that may be involved in cytochrome c maturation in mitochondria. The polypeptide is Cytochrome c-type biogenesis protein CcmE homolog, mitochondrial (Arabidopsis thaliana (Mouse-ear cress)).